A 475-amino-acid chain; its full sequence is Cytochrome P450 monooxygenase sthD (475 aa).

Positions 1-17 are cleaved as a signal peptide; it reads MAAYFLLGLYGSTLVYR. Residues 276–296 traverse the membrane as a helical segment; that stretch reads FIIIAGSDTVAATLTFAFFYL. An N-linked (GlcNAc...) asparagine glycan is attached at N336. C418 serves as a coordination point for heme.

The protein belongs to the cytochrome P450 family. The cofactor is heme.

The protein localises to the membrane. It carries out the reaction betaenone A + NADPH + O2 + H(+) = stemphyloxin II + NADP(+) + H2O. It catalyses the reaction betaenone C + NADPH + O2 + H(+) = stemphyloxin I + NADP(+) + H2O. The protein operates within mycotoxin biosynthesis. Cytochrome P450 monooxygenase; part of the gene cluster that mediates the biosynthesis of the phytotoxin stemphyloxin II. The first step of the pathway is the synthesis of dehydroprobetaenone I by the polyketide synthase sthA and the enoyl reductase sthE via condensation of one acetyl-CoA starter unit with 7 malonyl-CoA units and 5 methylations. The C-terminal reductase (R) domain of sthA catalyzes the reductive release of the polyketide chain. Because sthA lacks a designated enoylreductase (ER) domain, the required activity is provided the enoyl reductase sthE. The short-chain dehydrogenase/reductase sthC then catalyzes reduction of dehydroprobetaenone I to probetaenone I. The cytochrome P450 monooxygenase sthF catalyzes successive epoxidation, oxidation (resulting from epoxide opening) and hydroxylation to install a tertiary alcohol in the decaline ring to yield betaenone C from dehydroprobetaenone I and betaenone B from probetaenone I. The FAD-linked oxidoreductase sthB is responsible for the conversion of betaenone C to betaenone A via an intramolecular aldol reaction between C-1 and C-17 to form the bridged tricyclic system in betaenone A. Finally, the cytochrome P450 monooxygenase sthD catalyzes the hydroxylation of C-15 to afford the final metabolite stemphyloxin II. This Phaeosphaeria nodorum (strain SN15 / ATCC MYA-4574 / FGSC 10173) (Glume blotch fungus) protein is Cytochrome P450 monooxygenase sthD.